Reading from the N-terminus, the 416-residue chain is CinA-like protein (416 aa).

The protein belongs to the CinA family.

The chain is CinA-like protein from Nostoc punctiforme (strain ATCC 29133 / PCC 73102).